The primary structure comprises 508 residues: MSDKTFEELGLTTWLVANCKQLGFKAPSNIQANTIPEILKGRDIIASAKTGSGKTASFAIPILNQLSEDPYGVFAVILTPTRELAVQIGEQFNAIGAPMNVNCSVVIGGIDNVTQALILDKRPHIIVATPGRLASHLNNGLKIALKFCKFLVLDEADRLLGEDFELEIASILEHLPPPEKRQTLLFSATMTKNLTKLDSIALNKPFIFEDNSKYDTVDTLKQEYIYMPAPTKDCYLVYILKKHEGSSAIVFVNNCYAVEAVKGMLNKLDIPSVSLHSFLDQKSRLAALKTFKSGKVKVLVATDVASRGLDIPDVQIVINYKLSNSSKDYIHRVGRTARFGRSGRAISFITPHDVSLIKGIEEIIKKQLELYKTDDDEVFRHLKEASTARKIVEIHLDEIEFGVKQKERRTERNELQKQLKEVNNKEKFENNNNDNNNNNKTKTTKPENKKEITKIQEQPSKSTTTTKSIEKKPTTIESKKIDKDIKRKENNFDDGEISLFKKKKITNK.

The Q motif motif lies at 4-32 (KTFEELGLTTWLVANCKQLGFKAPSNIQA). The region spanning 35 to 208 (IPEILKGRDI…SIALNKPFIF (174 aa)) is the Helicase ATP-binding domain. 48 to 55 (AKTGSGKT) is a binding site for ATP. The DEAD box motif lies at 154 to 157 (DEAD). The Helicase C-terminal domain occupies 219 to 379 (TLKQEYIYMP…LYKTDDDEVF (161 aa)). The segment at 422–476 (VNNKEKFENNNNDNNNNNKTKTTKPENKKEITKIQEQPSKSTTTTKSIEKKPTTI) is disordered. The span at 430 to 441 (NNNNDNNNNNKT) shows a compositional bias: low complexity. Positions 444 to 454 (TKPENKKEITK) are enriched in basic and acidic residues.

Belongs to the DEAD box helicase family. DDX49/DBP8 subfamily.

The catalysed reaction is ATP + H2O = ADP + phosphate + H(+). Probable ATP-binding RNA helicase. The polypeptide is Probable ATP-dependent RNA helicase ddx49 (ddx49) (Dictyostelium discoideum (Social amoeba)).